Here is a 145-residue protein sequence, read N- to C-terminus: Pseudoazurin (145 aa).

The signal sequence occupies residues 1–22; the sequence is MFHHSLAAAAAALLALAAPGFA. Residues 27 to 115 form the Plastocyanin-like domain; that stretch reads VHMLNKGESG…MGMVGLVQVG (89 aa). Residues His62, Cys100, His103, and Met108 each coordinate Cu cation. A disordered region spans residues 126–145; sequence TAKMPKKARERMDAELAQVN.

As to quaternary structure, homodimer. Cu cation serves as cofactor.

It localises to the periplasm. Its function is as follows. This soluble electron transfer copper protein is required for the inactivation of copper-containing nitrite reductase in the presence of oxygen. The polypeptide is Pseudoazurin (pazS) (Paracoccus pantotrophus (Thiosphaera pantotropha)).